Consider the following 616-residue polypeptide: DNA-binding protein RFX5 (616 aa).

The tract at residues 1–29 (MAEDEPDAKSPKTGGRAPPGGAEAGEPTT) is disordered. Ala-2 bears the N-acetylalanine mark. Position 10 is a phosphoserine (Ser-10). Over residues 13 to 29 (TGGRAPPGGAEAGEPTT) the composition is skewed to low complexity. An N-terminal domain region spans residues 25–90 (GEPTTLLQRL…PSTLSNEEYM (66 aa)). The tract at residues 62 to 66 (LYLYL) is leucine-rich region; critical for dimer formation and for interaction with RFXAP. Residues 92–168 (AYRWIRNHLE…YCYSGIRRKT (77 aa)) constitute a DNA-binding region (RFX-type winged-helix). The PxLPxI/L motif; mediates interaction with RFXANK motif lies at 173–178 (PPLPGL). The residue at position 185 (Ser-185) is a Phosphoserine. Disordered stretches follow at residues 252–314 (AEED…ESSA) and 391–616 (LPGP…ATPP). Over residues 276-293 (GAHKKPERLAQPPKDLEA) the composition is skewed to basic and acidic residues. Residues 391–401 (LPGPGPGPGRA) are compositionally biased toward pro residues. Positions 424–434 (GPHDKGVKRTA) are enriched in basic and acidic residues. Over residues 463-473 (KRKRGRPRKKS) the composition is skewed to basic residues. The span at 534-546 (QGDGTVSKGGRGP) shows a compositional bias: gly residues. The segment covering 606-616 (QEHKDPKATPP) has biased composition (basic and acidic residues).

The protein belongs to the RFX family. Homodimer. The RFX heterotetrameric complex consists of 2 molecules of RFX5 and one each of RFXAP and RFX-B/RFXANK; with each subunit representing a separate complementation group. Interacts (via PxLPxI/L motif) with RFXANK (via ankyrin repeats); the interaction is direct. RFX forms cooperative DNA binding complexes with X2BP and CBF/NF-Y. RFX associates with CIITA to form an active transcriptional complex. Post-translationally, phosphorylated. In terms of tissue distribution, ubiquitous.

The protein localises to the nucleus. Its function is as follows. Activates transcription from class II MHC promoters. Recognizes X-boxes. Mediates cooperative binding between RFX and NF-Y. RFX binds the X1 box of MHC-II promoters. This is DNA-binding protein RFX5 (RFX5) from Homo sapiens (Human).